Reading from the N-terminus, the 322-residue chain is Lipoyl synthase (322 aa).

The interval 1–24 is disordered; it reads MVTVLDTVSKPRPRHPEKAHRPDQ. The segment covering 14-24 has biased composition (basic and acidic residues); the sequence is RHPEKAHRPDQ. 7 residues coordinate [4Fe-4S] cluster: cysteine 59, cysteine 64, cysteine 70, cysteine 85, cysteine 89, cysteine 92, and serine 298. The Radical SAM core domain maps to 71–287; the sequence is WDKKHATFMI…ETIAYTKGFL (217 aa).

This sequence belongs to the radical SAM superfamily. Lipoyl synthase family. It depends on [4Fe-4S] cluster as a cofactor.

It localises to the cytoplasm. It carries out the reaction [[Fe-S] cluster scaffold protein carrying a second [4Fe-4S](2+) cluster] + N(6)-octanoyl-L-lysyl-[protein] + 2 oxidized [2Fe-2S]-[ferredoxin] + 2 S-adenosyl-L-methionine + 4 H(+) = [[Fe-S] cluster scaffold protein] + N(6)-[(R)-dihydrolipoyl]-L-lysyl-[protein] + 4 Fe(3+) + 2 hydrogen sulfide + 2 5'-deoxyadenosine + 2 L-methionine + 2 reduced [2Fe-2S]-[ferredoxin]. Its pathway is protein modification; protein lipoylation via endogenous pathway; protein N(6)-(lipoyl)lysine from octanoyl-[acyl-carrier-protein]: step 2/2. Catalyzes the radical-mediated insertion of two sulfur atoms into the C-6 and C-8 positions of the octanoyl moiety bound to the lipoyl domains of lipoate-dependent enzymes, thereby converting the octanoylated domains into lipoylated derivatives. The sequence is that of Lipoyl synthase from Chelativorans sp. (strain BNC1).